The sequence spans 159 residues: uncharacterized protein (159 aa).

Residues 1-139 (MSRRAPGSRL…RKSQERSMSY (139 aa)) are disordered. The span at 9–31 (RLSSGGTNYSRSWNDWQPRTDSA) shows a compositional bias: polar residues. The segment covering 65–82 (QRHDDTRVHADIQNDEKG) has biased composition (basic and acidic residues). Residues 105–119 (RVNNVTSPEFTSVQH) show a composition bias toward polar residues. Over residues 125-134 (ATKDMRKSQE) the composition is skewed to basic and acidic residues.

This is an uncharacterized protein from Homo sapiens (Human).